We begin with the raw amino-acid sequence, 138 residues long: Cysteine desulfuration protein SufE (138 aa).

Catalysis depends on C51, which acts as the Cysteine persulfide intermediate.

This sequence belongs to the SufE family. As to quaternary structure, homodimer. Interacts with SufS.

The protein localises to the cytoplasm. The protein operates within cofactor biosynthesis; iron-sulfur cluster biosynthesis. Participates in cysteine desulfuration mediated by SufS. Cysteine desulfuration mobilizes sulfur from L-cysteine to yield L-alanine and constitutes an essential step in sulfur metabolism for biosynthesis of a variety of sulfur-containing biomolecules. Functions as a sulfur acceptor for SufS, by mediating the direct transfer of the sulfur atom from the S-sulfanylcysteine of SufS, an intermediate product of cysteine desulfuration process. The polypeptide is Cysteine desulfuration protein SufE (Escherichia coli O81 (strain ED1a)).